The sequence spans 200 residues: Outer-membrane lipoprotein LolB (200 aa).

An N-terminal signal peptide occupies residues 1 to 18; the sequence is MRRGRLLIAGLAALVLSA. A lipid anchor (N-palmitoyl cysteine) is attached at Cys-19. A lipid anchor (S-diacylglycerol cysteine) is attached at Cys-19.

The protein belongs to the LolB family. Monomer.

The protein localises to the cell outer membrane. Functionally, plays a critical role in the incorporation of lipoproteins in the outer membrane after they are released by the LolA protein. The protein is Outer-membrane lipoprotein LolB of Alkalilimnicola ehrlichii (strain ATCC BAA-1101 / DSM 17681 / MLHE-1).